The chain runs to 258 residues: 4-hydroxy-2-oxovalerate aldolase (258 aa).

His48 serves as the catalytic Proton acceptor. Gln149 is a substrate binding site. Glu151 contacts Mg(2+). Substrate is bound by residues Ala176 and Asp177. Asp177 contacts Mg(2+).

Belongs to the HpcH/HpaI aldolase family.

The enzyme catalyses (S)-4-hydroxy-2-oxopentanoate = acetaldehyde + pyruvate. The protein operates within xenobiotic degradation; biphenyl degradation. In terms of biological role, catalyzes the reversible retro-aldol cleavage of 4-hydroxy-2-oxovalerate to pyruvate and acetaldehyde. In Rhodococcus jostii (strain RHA1), this protein is 4-hydroxy-2-oxovalerate aldolase (bphF).